The primary structure comprises 129 residues: Phosphoribosyl-AMP cyclohydrolase (129 aa).

Residue Asp77 coordinates Mg(2+). Position 78 (Cys78) interacts with Zn(2+). Mg(2+) contacts are provided by Asp79 and Asp81. Zn(2+) contacts are provided by Cys94 and Cys101.

This sequence belongs to the PRA-CH family. As to quaternary structure, homodimer. Mg(2+) is required as a cofactor. Zn(2+) serves as cofactor.

Its subcellular location is the cytoplasm. The enzyme catalyses 1-(5-phospho-beta-D-ribosyl)-5'-AMP + H2O = 1-(5-phospho-beta-D-ribosyl)-5-[(5-phospho-beta-D-ribosylamino)methylideneamino]imidazole-4-carboxamide. It functions in the pathway amino-acid biosynthesis; L-histidine biosynthesis; L-histidine from 5-phospho-alpha-D-ribose 1-diphosphate: step 3/9. In terms of biological role, catalyzes the hydrolysis of the adenine ring of phosphoribosyl-AMP. The polypeptide is Phosphoribosyl-AMP cyclohydrolase (Pelotomaculum thermopropionicum (strain DSM 13744 / JCM 10971 / SI)).